Reading from the N-terminus, the 101-residue chain is Multivesicular body sorting factor 12 (101 aa).

At methionine 1 the chain carries N-acetylmethionine. Position 94 is a phosphoserine (serine 94).

As to quaternary structure, component of the ESCRT-I complex (endosomal sorting complex required for transport I) which consists of STP22, VPS28, SRN2 and MVB12 in a 1:1:1:1 stoichiometry. Interacts with STP22 and SRN2.

It localises to the cytoplasm. The protein resides in the endosome. Its subcellular location is the late endosome membrane. Its function is as follows. Component of the ESCRT-I complex, a regulator of vesicular trafficking process. Binds to ubiquitinated cargo proteins and is required for the sorting of endocytic ubiquitinated cargos into multivesicular bodies (MVBs). Appears to be involved in cargo sorting and release of the ESCRT-I complex from the MVBs. This chain is Multivesicular body sorting factor 12 (MVB12), found in Saccharomyces cerevisiae (strain ATCC 204508 / S288c) (Baker's yeast).